Consider the following 548-residue polypeptide: Tylosin resistance ATP-binding protein TlrC (548 aa).

2 ABC transporter domains span residues 9–265 and 347–547; these read LSLH…RRRQ and IATA…VSGA. ATP contacts are provided by residues 41 to 48 and 387 to 394; these read GDNGAGKS and GPNGAGKS.

This sequence belongs to the ABC transporter superfamily.

The protein localises to the cell membrane. Functionally, responsible for tylosin resistance, and is proposed to be a subunit of a multicomponent export system for the energy-dependent efflux of tylosin. This chain is Tylosin resistance ATP-binding protein TlrC (tlrC), found in Streptomyces fradiae (Streptomyces roseoflavus).